Consider the following 893-residue polypeptide: UPF0182 protein CLK_3152 (893 aa).

A run of 7 helical transmembrane segments spans residues Ile-9–Ile-29, Ala-49–Tyr-69, Leu-94–Tyr-114, Val-154–Glu-174, Leu-202–Trp-222, Phe-246–Val-266, and Val-273–Leu-293.

It belongs to the UPF0182 family.

It localises to the cell membrane. This is UPF0182 protein CLK_3152 from Clostridium botulinum (strain Loch Maree / Type A3).